Reading from the N-terminus, the 208-residue chain is ATP-dependent Clp protease proteolytic subunit (208 aa).

The active-site Nucleophile is S106. H131 is an active-site residue.

It belongs to the peptidase S14 family. As to quaternary structure, fourteen ClpP subunits assemble into 2 heptameric rings which stack back to back to give a disk-like structure with a central cavity, resembling the structure of eukaryotic proteasomes.

The protein resides in the cytoplasm. It catalyses the reaction Hydrolysis of proteins to small peptides in the presence of ATP and magnesium. alpha-casein is the usual test substrate. In the absence of ATP, only oligopeptides shorter than five residues are hydrolyzed (such as succinyl-Leu-Tyr-|-NHMec, and Leu-Tyr-Leu-|-Tyr-Trp, in which cleavage of the -Tyr-|-Leu- and -Tyr-|-Trp bonds also occurs).. Cleaves peptides in various proteins in a process that requires ATP hydrolysis. Has a chymotrypsin-like activity. Plays a major role in the degradation of misfolded proteins. The polypeptide is ATP-dependent Clp protease proteolytic subunit (Roseobacter denitrificans (strain ATCC 33942 / OCh 114) (Erythrobacter sp. (strain OCh 114))).